Reading from the N-terminus, the 351-residue chain is Fructose-1,6-bisphosphatase class 1 1 (351 aa).

4 residues coordinate Mg(2+): Glu-84, Asp-106, Leu-108, and Asp-109. Substrate-binding positions include 109-112 and Asn-205; that span reads DGSS. Residue Glu-277 coordinates Mg(2+).

Belongs to the FBPase class 1 family. Homotetramer. The cofactor is Mg(2+).

It is found in the cytoplasm. The catalysed reaction is beta-D-fructose 1,6-bisphosphate + H2O = beta-D-fructose 6-phosphate + phosphate. The protein operates within carbohydrate biosynthesis; Calvin cycle. The polypeptide is Fructose-1,6-bisphosphatase class 1 1 (Methylibium petroleiphilum (strain ATCC BAA-1232 / LMG 22953 / PM1)).